We begin with the raw amino-acid sequence, 248 residues long: Phosphoadenosine 5'-phosphosulfate reductase (248 aa).

Catalysis depends on Cys-239, which acts as the Nucleophile; cysteine thiosulfonate intermediate.

Belongs to the PAPS reductase family. CysH subfamily.

It is found in the cytoplasm. The catalysed reaction is [thioredoxin]-disulfide + sulfite + adenosine 3',5'-bisphosphate + 2 H(+) = [thioredoxin]-dithiol + 3'-phosphoadenylyl sulfate. It functions in the pathway sulfur metabolism; hydrogen sulfide biosynthesis; sulfite from sulfate: step 3/3. Its function is as follows. Catalyzes the formation of sulfite from phosphoadenosine 5'-phosphosulfate (PAPS) using thioredoxin as an electron donor. The protein is Phosphoadenosine 5'-phosphosulfate reductase of Alteromonas mediterranea (strain DSM 17117 / CIP 110805 / LMG 28347 / Deep ecotype).